A 212-amino-acid polypeptide reads, in one-letter code: Pyridoxine/pyridoxamine 5'-phosphate oxidase 1 (212 aa).

Substrate-binding positions include R8–Y11 and K66. Residues R61–K66, F76–T77, K83, and Q105 contribute to the FMN site. The substrate site is built by Y123, R127, and S131. FMN is bound by residues Q140–S141 and W184. R190 to H192 is a substrate binding site. R194 serves as a coordination point for FMN.

The protein belongs to the pyridoxamine 5'-phosphate oxidase family. Homodimer. The cofactor is FMN.

It carries out the reaction pyridoxamine 5'-phosphate + O2 + H2O = pyridoxal 5'-phosphate + H2O2 + NH4(+). It catalyses the reaction pyridoxine 5'-phosphate + O2 = pyridoxal 5'-phosphate + H2O2. It participates in cofactor metabolism; pyridoxal 5'-phosphate salvage; pyridoxal 5'-phosphate from pyridoxamine 5'-phosphate: step 1/1. Its pathway is cofactor metabolism; pyridoxal 5'-phosphate salvage; pyridoxal 5'-phosphate from pyridoxine 5'-phosphate: step 1/1. In terms of biological role, catalyzes the oxidation of either pyridoxine 5'-phosphate (PNP) or pyridoxamine 5'-phosphate (PMP) into pyridoxal 5'-phosphate (PLP). In Ralstonia nicotianae (strain ATCC BAA-1114 / GMI1000) (Ralstonia solanacearum), this protein is Pyridoxine/pyridoxamine 5'-phosphate oxidase 1.